A 944-amino-acid chain; its full sequence is Protocadherin gamma-C5 (944 aa).

Residues 1–29 (MGPKTLPQLAGKWQVLCMLSLCCWGWVSG) form the signal peptide. Cadherin domains are found at residues 30 to 133 (QLRY…SPSF), 134 to 242 (ATPE…APTF), 243 to 350 (QSSV…APEV), 351 to 454 (LLAS…APRF), 455 to 564 (NQQL…APAV), and 571 to 677 (WEHS…MPKS). The Extracellular portion of the chain corresponds to 30 to 693 (QLRYSVVEES…PPERSDLTLY (664 aa)). Residues asparagine 265, asparagine 443, and asparagine 547 are each glycosylated (N-linked (GlcNAc...) asparagine). A helical membrane pass occupies residues 694 to 714 (LIVALATVSLLSLVTFTFLSA). The Cytoplasmic portion of the chain corresponds to 715 to 944 (KCLQGNADGD…KKKSGKKEKK (230 aa)). Disordered regions lie at residues 722–747 (DGDGGGGQCCRRQDSPSPDFYKQSSP), 812–853 (SNTL…WPNN), and 914–944 (ATLTNAAGKRDGKAPAGGNGNKKKSGKKEKK). Positions 820–853 (QQAPPNTDWRFSQAQRPGTSGSQNGDDTGTWPNN) are enriched in polar residues. Residues 934–944 (NKKKSGKKEKK) are compositionally biased toward basic residues.

It is found in the cell membrane. In terms of biological role, potential calcium-dependent cell-adhesion protein. May be involved in the establishment and maintenance of specific neuronal connections in the brain. In Homo sapiens (Human), this protein is Protocadherin gamma-C5 (PCDHGC5).